The primary structure comprises 64 residues: uncharacterized protein (64 aa).

The chain crosses the membrane as a helical span at residues 41–61 (VFLALKVLGIMVLFYLLDAII).

Its subcellular location is the membrane. This is an uncharacterized protein from Acheta domesticus (House cricket).